The chain runs to 359 residues: Phosphatidylglycerol--prolipoprotein diacylglyceryl transferase (359 aa).

The next 4 helical transmembrane spans lie at 24 to 44 (VALRAYALFIIVGIVVAIVWG), 58 to 78 (VLDIAIWAVPFGLIGGRLYHV), 98 to 118 (VWQGGLGIWGAVALGGVGAWI), and 124 to 144 (GIPLPALGDAVAPAILLAQAI). Arg146 provides a ligand contact to a 1,2-diacyl-sn-glycero-3-phospho-(1'-sn-glycerol). Helical transmembrane passes span 193-213 (FVVHPTFLYEALWNVLIVLLL), 222-243 (IGHGRLFALYVAGYCAGRFWIE), and 258-278 (VNSFTSALVFVAALVYFFAAT). The tract at residues 284–359 (PAELRPADGG…IDSKKDDAND (76 aa)) is disordered. Basic and acidic residues predominate over residues 306–323 (IAQKEPEKNVEDAGKDEG). Positions 336–349 (ASTASTGGEAGTKT) are enriched in low complexity. Residues 350–359 (IDSKKDDAND) show a composition bias toward basic and acidic residues.

Belongs to the Lgt family.

The protein localises to the cell membrane. The enzyme catalyses L-cysteinyl-[prolipoprotein] + a 1,2-diacyl-sn-glycero-3-phospho-(1'-sn-glycerol) = an S-1,2-diacyl-sn-glyceryl-L-cysteinyl-[prolipoprotein] + sn-glycerol 1-phosphate + H(+). It participates in protein modification; lipoprotein biosynthesis (diacylglyceryl transfer). Its function is as follows. Catalyzes the transfer of the diacylglyceryl group from phosphatidylglycerol to the sulfhydryl group of the N-terminal cysteine of a prolipoprotein, the first step in the formation of mature lipoproteins. This is Phosphatidylglycerol--prolipoprotein diacylglyceryl transferase from Rhodococcus jostii (strain RHA1).